A 445-amino-acid polypeptide reads, in one-letter code: Lateral flagellar hook-associated protein 2 (445 aa).

Residues 388-423 (SGAFKSRKEALQANLDRLSDKQTTLERKYDMSYKRY) are a coiled coil.

This sequence belongs to the FliD family. As to quaternary structure, homopentamer.

Its subcellular location is the secreted. The protein localises to the bacterial flagellum. In terms of biological role, required for the morphogenesis and for the elongation of the flagellar filament by facilitating polymerization of the flagellin monomers at the tip of growing filament. Forms a capping structure, which prevents flagellin subunits (transported through the central channel of the flagellum) from leaking out without polymerization at the distal end. Essential for swarming motility. This is Lateral flagellar hook-associated protein 2 (fliDL) from Vibrio parahaemolyticus serotype O3:K6 (strain RIMD 2210633).